A 439-amino-acid polypeptide reads, in one-letter code: Ribosomal protein uS12 methylthiotransferase RimO (439 aa).

An MTTase N-terminal domain is found at 6–116; it reads GKVGFVSLGC…VMNQVHQVAP (111 aa). [4Fe-4S] cluster is bound by residues Cys15, Cys51, Cys80, Cys148, Cys152, and Cys155. The Radical SAM core domain maps to 134–371; sequence LTPKHYAYLK…MEVQQRISAS (238 aa). One can recognise a TRAM domain in the interval 374 to 439; that stretch reads QAKIGKRMDV…DEYDLWGRPV (66 aa).

This sequence belongs to the methylthiotransferase family. RimO subfamily. Requires [4Fe-4S] cluster as cofactor.

The protein resides in the cytoplasm. It carries out the reaction L-aspartate(89)-[ribosomal protein uS12]-hydrogen + (sulfur carrier)-SH + AH2 + 2 S-adenosyl-L-methionine = 3-methylsulfanyl-L-aspartate(89)-[ribosomal protein uS12]-hydrogen + (sulfur carrier)-H + 5'-deoxyadenosine + L-methionine + A + S-adenosyl-L-homocysteine + 2 H(+). Functionally, catalyzes the methylthiolation of an aspartic acid residue of ribosomal protein uS12. The polypeptide is Ribosomal protein uS12 methylthiotransferase RimO (Hahella chejuensis (strain KCTC 2396)).